The primary structure comprises 148 residues: Cystatin-C (148 aa).

The signal sequence occupies residues 1-28 (MARSLGVPLLLLAALVVALALAVSPAAG). The Secondary area of contact signature appears at 83–87 (QIVSG). Intrachain disulfides connect cysteine 101/cysteine 111 and cysteine 125/cysteine 145.

Belongs to the cystatin family.

It localises to the secreted. Its function is as follows. This is a thiol proteinase inhibitor. The protein is Cystatin-C (CST3) of Oryctolagus cuniculus (Rabbit).